The chain runs to 205 residues: High frequency lysogenization protein HflD homolog (205 aa).

The protein belongs to the HflD family.

The protein resides in the cytoplasm. It localises to the cell inner membrane. This chain is High frequency lysogenization protein HflD homolog, found in Shewanella sp. (strain W3-18-1).